Here is a 411-residue protein sequence, read N- to C-terminus: Growth-regulating factor 7 (411 aa).

The QLQ domain occupies 38 to 73; it reads PFTPTQWMELEHQALIYKHIVANAPVPAGLLLPIRR. In terms of domain architecture, WRC spans 108–152; that stretch reads DSEPGRCRRTDGKKWRCSRDAVVDQKYCERHINRGRHRSRKHVEG. 2 consecutive short sequence motifs (bipartite nuclear localization signal) follow at residues 113–123 and 141–148; these read RCRRTDGKKWR and RGRHRSRK. A disordered region spans residues 333–369; that stretch reads FFTNTSSASDDKGKSRHPPSLNLLADGHTTSPQLQSP. The segment covering 360-369 has biased composition (polar residues); sequence HTTSPQLQSP.

Belongs to the GRF family.

The protein resides in the nucleus. Its function is as follows. Transcription activator that plays a regulatory role in gibberellin-induced stem elongation. The sequence is that of Growth-regulating factor 7 (GRF7) from Oryza sativa subsp. japonica (Rice).